We begin with the raw amino-acid sequence, 308 residues long: Testis-specific Y-encoded protein 1 (308 aa).

Belongs to the nucleosome assembly protein (NAP) family. Post-translationally, phosphorylated. As to expression, specifically expressed in testicular tissues. Isoform 1 and isoform 2 are expressed in spermatogonia and spermatocytes. Found in early testicular carcinoma in situ, spermatogonial cells in testicular tissues of 46,X,Y female and in prostate cancer cell lines.

The protein resides in the cytoplasm. It is found in the nucleus. In terms of biological role, may be involved in sperm differentiation and proliferation. The chain is Testis-specific Y-encoded protein 1 (TSPY1) from Homo sapiens (Human).